The sequence spans 144 residues: Peptide methionine sulfoxide reductase MsrB (144 aa).

Residues 5–127 (KEEKIKSLNR…NSAALRFIPK (123 aa)) enclose the MsrB domain. C116 (nucleophile) is an active-site residue.

Belongs to the MsrB Met sulfoxide reductase family.

It carries out the reaction L-methionyl-[protein] + [thioredoxin]-disulfide + H2O = L-methionyl-(R)-S-oxide-[protein] + [thioredoxin]-dithiol. The chain is Peptide methionine sulfoxide reductase MsrB from Bacillus velezensis (strain DSM 23117 / BGSC 10A6 / LMG 26770 / FZB42) (Bacillus amyloliquefaciens subsp. plantarum).